A 295-amino-acid chain; its full sequence is MLIIDGKKVSLDLKNELKASVDNFRSITGKVPGLTVIIVGQDPASQVYVRNKAKTCKEIGMISTVIEMADDTTEKHLIETIHKLNNDPTVHGILVQQPLPKQIDEFAVTLAIDPSKDVDGFHPENLGRLVMGHLDKCFVSCTPYGILELLGRYNIETRGKHCVVVGRSNIVGKPMANLMLQKLDATNCTVTICHSATKNIPFYTLQADILIAAIGKAGFITADMVKPGAVVIDVGINRIEDPSTKSGYRLVGDVDFEAVSTVASAMTPVPGGVGPMTIAMLLKNTLQSFQRINNL.

NADP(+) is bound by residues 166–168 (GRS), S195, and I236.

The protein belongs to the tetrahydrofolate dehydrogenase/cyclohydrolase family. Homodimer.

It catalyses the reaction (6R)-5,10-methylene-5,6,7,8-tetrahydrofolate + NADP(+) = (6R)-5,10-methenyltetrahydrofolate + NADPH. The enzyme catalyses (6R)-5,10-methenyltetrahydrofolate + H2O = (6R)-10-formyltetrahydrofolate + H(+). Its pathway is one-carbon metabolism; tetrahydrofolate interconversion. In terms of biological role, catalyzes the oxidation of 5,10-methylenetetrahydrofolate to 5,10-methenyltetrahydrofolate and then the hydrolysis of 5,10-methenyltetrahydrofolate to 10-formyltetrahydrofolate. In Pelodictyon phaeoclathratiforme (strain DSM 5477 / BU-1), this protein is Bifunctional protein FolD.